Consider the following 348-residue polypeptide: Histidinol-phosphate aminotransferase (348 aa).

An N6-(pyridoxal phosphate)lysine modification is found at Lys-210.

It belongs to the class-II pyridoxal-phosphate-dependent aminotransferase family. Histidinol-phosphate aminotransferase subfamily. Homodimer. Pyridoxal 5'-phosphate serves as cofactor.

The catalysed reaction is L-histidinol phosphate + 2-oxoglutarate = 3-(imidazol-4-yl)-2-oxopropyl phosphate + L-glutamate. Its pathway is amino-acid biosynthesis; L-histidine biosynthesis; L-histidine from 5-phospho-alpha-D-ribose 1-diphosphate: step 7/9. The chain is Histidinol-phosphate aminotransferase from Pseudomonas putida (strain W619).